The sequence spans 508 residues: Erythropoietin receptor (508 aa).

The signal sequence occupies residues 1–24; that stretch reads MNHLWTHLWPGVGSLCLLLAGAAW. At 25 to 250 the chain is on the extracellular side; the sequence is ASLPKPLDPK…SLLTASDLDP (226 aa). A disulfide bridge connects residues C52 and C62. N-linked (GlcNAc...) asparagine glycosylation occurs at N76. The cysteines at positions 91 and 107 are disulfide-linked. In terms of domain architecture, Fibronectin type-III spans 148–247; it reads PPAGLLARRA…EPASLLTASD (100 aa). N-linked (GlcNAc...) asparagine glycosylation is present at N184. A WSXWS motif motif is present at residues 233–237; it reads WSAWS. Residues 251-273 traverse the membrane as a helical segment; the sequence is LILTLSLILVLILLLLAVLALLS. The Cytoplasmic segment spans residues 274–508; it reads HRRTLKQKIW…PSPPGYVACS (235 aa). K281 is covalently cross-linked (Glycyl lysine isopeptide (Lys-Gly) (interchain with G-Cter in ubiquitin)). Residues 282–290 carry the Box 1 motif motif; the sequence is IWPGIPSPE. Phosphotyrosine; by JAK2 occurs at positions 368 and 426. The ITIM motif signature appears at 452 to 457; sequence IKYLYL. K453 participates in a covalent cross-link: Glycyl lysine isopeptide (Lys-Gly) (interchain with G-Cter in ubiquitin). A phosphotyrosine; by JAK2 mark is found at Y454, Y456, Y468, Y489, and Y504. Positions 467–508 are disordered; sequence DYSSGGSQGAQGDSLNSPFLNPYENSLIPAPEPSPPGYVACS.

This sequence belongs to the type I cytokine receptor family. Type 1 subfamily. In terms of assembly, forms homodimers on EPO stimulation. The tyrosine-phosphorylated form interacts with several SH2 domain-containing proteins including LYN, the adapter protein SH2B2, PTPN6, PTPN11, JAK2, PI3 kinases, STAT5A/B, SOCS3, CRKL. Interacts with INPP5D/SHIP1. SH2B2 binding inhibits the JAK-STAT signaling. Interacts with RHEX; this interaction occurs in a erythropoietin (EPO)-dependent manner. Interacts with ATXN2L. Post-translationally, on EPO stimulation, phosphorylated on C-terminal tyrosine residues by JAK2. The phosphotyrosine motifs are also recruitment sites for several SH2-containing proteins and adapter proteins which mediate cell proliferation. Phosphorylation on Tyr-454 is required for PTPN6 interaction, Tyr-426 for PTPN11. Tyr-426 is also required for SOCS3 binding, but Tyr-454/Tyr-456 motif is the preferred binding site. Ubiquitinated by the ECS(SOCS2) complex following ligand-binding and phosphorylation by JAK2, leading to its degradation by the proteasome. Regulation by the ECS(SOCS2) complex acts as a negative feedback loop of erythropoietin-mediated signaling pathway. Ubiquitination at Lys-281 mediates receptor internalization, whereas ubiquitination at Lys-453 promotes trafficking of activated receptors to the lysosomes for degradation. Ubiquitinated by NOSIP; appears to be either multi-monoubiquitinated or polyubiquitinated. Ubiquitination mediates proliferation and survival of EPO-dependent cells.

Its subcellular location is the cell membrane. In terms of biological role, receptor for erythropoietin, which mediates erythropoietin-induced erythroblast proliferation and differentiation. Upon EPO stimulation, EPOR dimerizes triggering the JAK2/STAT5 signaling cascade. In some cell types, can also activate STAT1 and STAT3. May also activate the LYN tyrosine kinase. Its function is as follows. Isoform EPOR-T acts as a dominant-negative receptor of EPOR-mediated signaling. This chain is Erythropoietin receptor (EPOR), found in Canis lupus familiaris (Dog).